A 379-amino-acid chain; its full sequence is Succinyl-diaminopimelate desuccinylase (379 aa).

A Zn(2+)-binding site is contributed by histidine 70. Aspartate 72 is an active-site residue. Residue aspartate 103 participates in Zn(2+) binding. Glutamate 137 functions as the Proton acceptor in the catalytic mechanism. Positions 138, 166, and 352 each coordinate Zn(2+).

Belongs to the peptidase M20A family. DapE subfamily. As to quaternary structure, homodimer. Requires Zn(2+) as cofactor. Co(2+) serves as cofactor.

It carries out the reaction N-succinyl-(2S,6S)-2,6-diaminopimelate + H2O = (2S,6S)-2,6-diaminopimelate + succinate. Its pathway is amino-acid biosynthesis; L-lysine biosynthesis via DAP pathway; LL-2,6-diaminopimelate from (S)-tetrahydrodipicolinate (succinylase route): step 3/3. Catalyzes the hydrolysis of N-succinyl-L,L-diaminopimelic acid (SDAP), forming succinate and LL-2,6-diaminopimelate (DAP), an intermediate involved in the bacterial biosynthesis of lysine and meso-diaminopimelic acid, an essential component of bacterial cell walls. This is Succinyl-diaminopimelate desuccinylase from Shewanella baltica (strain OS155 / ATCC BAA-1091).